The sequence spans 886 residues: Interference hedgehog (886 aa).

An N-terminal signal peptide occupies residues 1–20 (MTLLTSSLLLFSLLTSRLEA). The Extracellular portion of the chain corresponds to 21–709 (IPVLEKSPAH…ETFNMSPMLT (689 aa)). The span at 29–38 (AHPAHSAHPA) shows a compositional bias: low complexity. The interval 29-52 (AHPAHSAHPAHPAHPAHPAHPSPG) is disordered. Ig-like C2-type domains are found at residues 51 to 148 (PGVR…IARL), 138 to 238 (PLVV…ERIQ), 258 to 346 (PHLL…YIKV), and 352 to 438 (PQIV…LQVN). 4 disulfide bridges follow: Cys-74–Cys-132, Cys-179–Cys-226, Cys-282–Cys-330, and Cys-373–Cys-420. N-linked (GlcNAc...) asparagine glycosylation is found at Asn-108 and Asn-215. The tract at residues 432–475 (GTLLQVNPKQIQEPRESGGTHRPKPNQGSRQKQMYPPTPPNVTR) is disordered. Fibronectin type-III domains lie at 467–573 (PPTP…LQPG) and 581–676 (VPEL…TQRP). An N-linked (GlcNAc...) asparagine glycan is attached at Asn-472. 4 residues coordinate heparin: Arg-503, Lys-507, Lys-509, and Arg-547. Residue Asn-563 is glycosylated (N-linked (GlcNAc...) asparagine). Residues 668–697 (LKQGRTQRPKTSTTEEPTLQMGDRDTTTPS) are disordered. A compositionally biased stretch (polar residues) spans 671–684 (GRTQRPKTSTTEEP). The N-linked (GlcNAc...) asparagine glycan is linked to Asn-699. The chain crosses the membrane as a helical span at residues 710-730 (GTIGGGAVLILLLISTCFCVC). At 731-886 (RRRNSRSRGN…SSGSLNSVGV (156 aa)) the chain is on the cytoplasmic side. Disordered regions lie at residues 734-768 (NSRS…QRQR) and 781-886 (QQQQ…SVGV). Low complexity-rich tracts occupy residues 829-843 (RAGG…NNNN) and 870-886 (SSRS…SVGV).

The protein belongs to the immunoglobulin superfamily. IHOG family. Homodimer. Heterotetramer; 2 iHog chains bind 2 hh chains when facilitated by heparin, heparin is required to promote high-affinity interactions between hh and iHog.

Its subcellular location is the membrane. Functionally, mediates response to the active Hedgehog (Hh) protein signal in embryos, functioning upstream or at the level of patched (ptc). The polypeptide is Interference hedgehog (ihog) (Drosophila melanogaster (Fruit fly)).